We begin with the raw amino-acid sequence, 493 residues long: Involucrin (493 aa).

3 disordered regions span residues 1–47 (MSQQ…CQKV), 60–123 (EEKH…GQLE), and 139–493 (KRDE…GQHE). A compositionally biased stretch (low complexity) spans 76–89 (EQQQPQEQELQQQH). Basic and acidic residues-rich tracts occupy residues 90–116 (WEQD…REKQ), 139–151 (KRDE…KEQL), 161–174 (QLKH…HLEL), 184–193 (NLEHQEKPLE), and 201–213 (QLKH…KPLE). Positions 228-240 (QEGQSELPEQQRG) are enriched in polar residues. 5 stretches are compositionally biased toward basic and acidic residues: residues 250-270 (GQLK…HEEG), 282-360 (KHLE…HEGQ), 372-386 (KHLE…HPEQ), 411-431 (KHLE…EQLK), and 439-450 (QLKDLEQQERQL). Residues 473–493 (GEVLLPVEQQQQKQEVQGQHE) are compositionally biased toward low complexity.

It belongs to the involucrin family. In terms of assembly, directly or indirectly cross-linked to cornifelin (CNFN). In terms of processing, substrate of transglutaminase. Specific glutamines or lysines are cross-linked to keratins, desmoplakin and to inter involucrin molecules. In terms of tissue distribution, keratinocytes of epidermis and other stratified squamous epithelia.

Its subcellular location is the cytoplasm. Its function is as follows. Part of the insoluble cornified cell envelope (CE) of stratified squamous epithelia. The sequence is that of Involucrin (IVL) from Saguinus oedipus (Cotton-top tamarin).